Here is a 469-residue protein sequence, read N- to C-terminus: Glutamate--tRNA ligase 1 (469 aa).

The 'HIGH' region motif lies at 10 to 20 (PSPTGYLHVGG). A 'KMSKS' region motif is present at residues 252–256 (KLSKR). Lys255 serves as a coordination point for ATP.

It belongs to the class-I aminoacyl-tRNA synthetase family. Glutamate--tRNA ligase type 1 subfamily. As to quaternary structure, monomer.

The protein resides in the cytoplasm. It carries out the reaction tRNA(Glu) + L-glutamate + ATP = L-glutamyl-tRNA(Glu) + AMP + diphosphate. Its function is as follows. Catalyzes the attachment of glutamate to tRNA(Glu) in a two-step reaction: glutamate is first activated by ATP to form Glu-AMP and then transferred to the acceptor end of tRNA(Glu). This Fervidobacterium nodosum (strain ATCC 35602 / DSM 5306 / Rt17-B1) protein is Glutamate--tRNA ligase 1.